The following is a 594-amino-acid chain: DNA mismatch repair protein MutL (594 aa).

It belongs to the DNA mismatch repair MutL/HexB family.

Functionally, this protein is involved in the repair of mismatches in DNA. It is required for dam-dependent methyl-directed DNA mismatch repair. May act as a 'molecular matchmaker', a protein that promotes the formation of a stable complex between two or more DNA-binding proteins in an ATP-dependent manner without itself being part of a final effector complex. This Tolumonas auensis (strain DSM 9187 / NBRC 110442 / TA 4) protein is DNA mismatch repair protein MutL.